Here is a 381-residue protein sequence, read N- to C-terminus: 5-amino-6-(D-ribitylamino)uracil--L-tyrosine 4-hydroxyphenyl transferase (381 aa).

One can recognise a Radical SAM core domain in the interval Val59–Asn306. Positions 73, 77, and 80 each coordinate [4Fe-4S] cluster.

This sequence belongs to the radical SAM superfamily. CofH family. As to quaternary structure, consists of two subunits, CofG and CofH. [4Fe-4S] cluster is required as a cofactor.

It catalyses the reaction 5-amino-6-(D-ribitylamino)uracil + L-tyrosine + S-adenosyl-L-methionine = 5-amino-5-(4-hydroxybenzyl)-6-(D-ribitylimino)-5,6-dihydrouracil + 2-iminoacetate + 5'-deoxyadenosine + L-methionine + H(+). It participates in cofactor biosynthesis; coenzyme F0 biosynthesis. Its function is as follows. Catalyzes the radical-mediated synthesis of 5-amino-5-(4-hydroxybenzyl)-6-(D-ribitylimino)-5,6-dihydrouracil from 5-amino-6-(D-ribitylamino)uracil and L-tyrosine. This chain is 5-amino-6-(D-ribitylamino)uracil--L-tyrosine 4-hydroxyphenyl transferase, found in Cyanothece sp. (strain PCC 7425 / ATCC 29141).